The primary structure comprises 404 residues: Probable sugar efflux transporter (404 aa).

The next 12 membrane-spanning stretches (helical) occupy residues 15–35 (VITF…PVAL), 51–71 (GLII…FMLL), 85–105 (LVLF…WVLV), 109–129 (IGVA…VIRV), 137–157 (QAIG…LPLG), 168–188 (ATFA…YQLL), 209–229 (PLLL…FTAY), 245–265 (SMAT…SLLF), 276–296 (FILF…IASQ), 299–319 (WTMF…GLGL), 333–353 (VAMA…ALLG), and 363–383 (AYIG…FILV).

The protein belongs to the major facilitator superfamily. SotB (TC 2.A.1.2) family.

Its subcellular location is the cell inner membrane. Its function is as follows. Involved in the efflux of sugars. The physiological role may be the reduction of the intracellular concentration of toxic sugars or sugar metabolites. This Pasteurella multocida (strain Pm70) protein is Probable sugar efflux transporter.